The sequence spans 81 residues: Large ribosomal subunit protein bL27 (81 aa).

Positions 1–11 (MATSKSGGSSK) are enriched in polar residues. The interval 1–26 (MATSKSGGSSKNGRDSISKRLGVKRS) is disordered.

Belongs to the bacterial ribosomal protein bL27 family.

In Borrelia turicatae (strain 91E135), this protein is Large ribosomal subunit protein bL27.